The following is a 158-amino-acid chain: NADH-quinone oxidoreductase subunit B 2 (158 aa).

[4Fe-4S] cluster contacts are provided by C37, C38, C102, and C132.

Belongs to the complex I 20 kDa subunit family. In terms of assembly, NDH-1 is composed of 14 different subunits. Subunits NuoB, C, D, E, F, and G constitute the peripheral sector of the complex. It depends on [4Fe-4S] cluster as a cofactor.

The protein resides in the cell inner membrane. It catalyses the reaction a quinone + NADH + 5 H(+)(in) = a quinol + NAD(+) + 4 H(+)(out). In terms of biological role, NDH-1 shuttles electrons from NADH, via FMN and iron-sulfur (Fe-S) centers, to quinones in the respiratory chain. Couples the redox reaction to proton translocation (for every two electrons transferred, four hydrogen ions are translocated across the cytoplasmic membrane), and thus conserves the redox energy in a proton gradient. This chain is NADH-quinone oxidoreductase subunit B 2, found in Acidithiobacillus ferrooxidans (strain ATCC 53993 / BNL-5-31) (Leptospirillum ferrooxidans (ATCC 53993)).